We begin with the raw amino-acid sequence, 166 residues long: Phospholipase A2 inhibitor B1 (166 aa).

Residues 1-19 form the signal peptide; the sequence is MRLILLSGLLLLGTFLVNG. The C-type lectin domain maps to 46–161; the sequence is LFHAFLTVHK…CDDNLLVVCE (116 aa). 2 cysteine pairs are disulfide-bonded: Cys-83-Cys-160 and Cys-138-Cys-152. N-linked (GlcNAc...) asparagine glycosylation is present at Asn-122.

It belongs to the alpha-type phospholipase A2 inhibitor family. As to quaternary structure, homotrimer; non-covalently linked. In terms of tissue distribution, expressed by the liver.

It localises to the secreted. Functionally, this phospholipase A2 inhibitor binds directly phospholipase A2 in the presence or absence of calcium. This Crotalus durissus terrificus (South American rattlesnake) protein is Phospholipase A2 inhibitor B1.